Reading from the N-terminus, the 262-residue chain is Acyl-[acyl-carrier-protein]--UDP-N-acetylglucosamine O-acyltransferase (262 aa).

It belongs to the transferase hexapeptide repeat family. LpxA subfamily. In terms of assembly, homotrimer.

The protein resides in the cytoplasm. It catalyses the reaction a (3R)-hydroxyacyl-[ACP] + UDP-N-acetyl-alpha-D-glucosamine = a UDP-3-O-[(3R)-3-hydroxyacyl]-N-acetyl-alpha-D-glucosamine + holo-[ACP]. It functions in the pathway glycolipid biosynthesis; lipid IV(A) biosynthesis; lipid IV(A) from (3R)-3-hydroxytetradecanoyl-[acyl-carrier-protein] and UDP-N-acetyl-alpha-D-glucosamine: step 1/6. In terms of biological role, involved in the biosynthesis of lipid A, a phosphorylated glycolipid that anchors the lipopolysaccharide to the outer membrane of the cell. This Salmonella dublin (strain CT_02021853) protein is Acyl-[acyl-carrier-protein]--UDP-N-acetylglucosamine O-acyltransferase.